Consider the following 921-residue polypeptide: MLWHYKISPHLSVITNSEPTMSNAVTAETANTNNTSIENAQYQPQLIEAAQQAKWATDKRFEVSNEPSDKPSRYMLSMFPYPSGKLHMGHVRNYTISDVLSRYYRLKGYEVMQPMGWDGFGLPAENAAIANQTPPAKWTFENIDSMRAQLKLLGLSIDWSREFATCSPEYYQWEQWLFLQLYKKGLVYKKLATVNWDPIDNTVLANEQVIDGKGWRSGAMVEKRDIPMYYFNITDYADELLDDLDQLEGHWPSEVITMQRNWIGRSSGMEVHFPYELAGESNSLDVFTTRPDTLMGVTYVAVAAEHPLAQYASEHNEAIAAFCALCKKGSVAEADLAKAEKVGIDTGLTVTHPLTGEEVPVWVANYVLMSYGSGAVMAVPAHDERDYEFATKYSLPIKQVIDIPARYFDDIEEGNDNRAYTERNTLVNSGEFDGMDFEQAFAAMLAKLEPQSLAKKKIQYRLRDWGVSRQRYWGCPIPMVNCEHCGTVPVEEQDLPVILPTDVVPDGRGNPLKNIPEFVNTTCPKCGNPAERETDTFDTFVESSWYYARFASPNDTTNMVNKSAANKWLPVDQYIGGVEHAVMHLLYARFFHKLMRDENLVSGDEPFANLMTQGMVLAGTFYRVNPDGSTTYYFTKDIDIDFNERGQPIKAILKSDGQPVTIGKIEKMSKSKNNGVDPQITIDKYGADTVRLYTLFTAPADQTLEWSDDALKGPYNFVKKVWRIASEHMQALTAANLSLDTLNNGTLNNDALNTEGLSKEAKALRRKTHETIGKIDSDLGKRLALNTPVSSLMELANELSNFKANSEQELQVQHEALIDLLIMLSVYAPHIGEHLLEQLGLDTVTLNYPAVDESALVQDMITMVIQVNGKMRGKMDVAPNSDPEALKAQARAIEGVAKFLTGEIKKEIVVPNKLVNIVVAG.

A 'HIGH' region motif is present at residues proline 80–histidine 90. A 'KMSKS' region motif is present at residues lysine 667–serine 671. Residue lysine 670 coordinates ATP.

Belongs to the class-I aminoacyl-tRNA synthetase family.

It is found in the cytoplasm. It carries out the reaction tRNA(Leu) + L-leucine + ATP = L-leucyl-tRNA(Leu) + AMP + diphosphate. The sequence is that of Leucine--tRNA ligase from Psychrobacter arcticus (strain DSM 17307 / VKM B-2377 / 273-4).